The following is a 513-amino-acid chain: 2,3-bisphosphoglycerate-independent phosphoglycerate mutase (513 aa).

Mn(2+)-binding residues include Asp15 and Ser65. Catalysis depends on Ser65, which acts as the Phosphoserine intermediate. Substrate contacts are provided by residues His126, 156–157, Arg188, Arg194, 263–266, and Lys337; these read RD and RADR. Mn(2+) contacts are provided by Asp402, His406, Asp443, His444, and His461.

This sequence belongs to the BPG-independent phosphoglycerate mutase family. Monomer. Mn(2+) serves as cofactor.

It carries out the reaction (2R)-2-phosphoglycerate = (2R)-3-phosphoglycerate. The protein operates within carbohydrate degradation; glycolysis; pyruvate from D-glyceraldehyde 3-phosphate: step 3/5. Its function is as follows. Catalyzes the interconversion of 2-phosphoglycerate and 3-phosphoglycerate. This is 2,3-bisphosphoglycerate-independent phosphoglycerate mutase from Moorella thermoacetica (strain ATCC 39073 / JCM 9320).